A 206-amino-acid chain; its full sequence is Small ribosomal subunit protein uS4 (206 aa).

Residues 96–156 (TRLDNVVYRM…EKSRTQARIK (61 aa)) enclose the S4 RNA-binding domain.

Belongs to the universal ribosomal protein uS4 family. In terms of assembly, part of the 30S ribosomal subunit. Contacts protein S5. The interaction surface between S4 and S5 is involved in control of translational fidelity.

In terms of biological role, one of the primary rRNA binding proteins, it binds directly to 16S rRNA where it nucleates assembly of the body of the 30S subunit. Its function is as follows. With S5 and S12 plays an important role in translational accuracy. This Shewanella sp. (strain ANA-3) protein is Small ribosomal subunit protein uS4.